The sequence spans 390 residues: MNIHEYQAKEIFREYGVPVPRGEVAFTGPEAREVAQRLGGDLWVVKAQIHAGGRGKAGGVKLARSLDEVEKIAEEMLGMTLVTHQTGPEGKKVEKVYVEEGADIQKEYYLGMVLDRSSEMPVMMASTEGGMEIEEVAAKTPEKIIKVAIDPTIGFQGFHGRKLAFGLGLAKEEIRPFIQFAEALYKVYMDKDANLIEINPLIKTGDGRFLALDAKMGFDDNALYKHPDIHEMRDLSEEDPVEVEAAKYGLSYVNLDGNVGCMVNGAGLAMATMDIIKHEGGEPANFLDVGGGANPDTVAKGFELILSDENVKSIFVNIFGGIVRCDRIANGILQATQQVEVNVPVVVRLDGTNAEEAAQILKNANIKNIIPATDLADGARKAVAAAKGEL.

An ATP-grasp domain is found at 9-244; the sequence is KEIFREYGVP…LSEEDPVEVE (236 aa). ATP contacts are provided by residues Lys46, 53–55, Glu99, Ala102, and Glu107; that span reads GRG. Mg(2+) contacts are provided by Asn199 and Asp213. Residues Asn264 and 321–323 contribute to the substrate site; that span reads GIV.

It belongs to the succinate/malate CoA ligase beta subunit family. Heterotetramer of two alpha and two beta subunits. Mg(2+) serves as cofactor.

It carries out the reaction succinate + ATP + CoA = succinyl-CoA + ADP + phosphate. It catalyses the reaction GTP + succinate + CoA = succinyl-CoA + GDP + phosphate. Its pathway is carbohydrate metabolism; tricarboxylic acid cycle; succinate from succinyl-CoA (ligase route): step 1/1. Its function is as follows. Succinyl-CoA synthetase functions in the citric acid cycle (TCA), coupling the hydrolysis of succinyl-CoA to the synthesis of either ATP or GTP and thus represents the only step of substrate-level phosphorylation in the TCA. The beta subunit provides nucleotide specificity of the enzyme and binds the substrate succinate, while the binding sites for coenzyme A and phosphate are found in the alpha subunit. The chain is Succinate--CoA ligase [ADP-forming] subunit beta from Nitratiruptor sp. (strain SB155-2).